The primary structure comprises 40 residues: MGTRCSLTDTRSATYARSGLLVMKTLKRGLQNGNPQEVNQ.

The sequence is that of Protein 4.1 from Escherichia phage T7 (Bacteriophage T7).